The sequence spans 350 residues: Phenylalanine--tRNA ligase alpha subunit (350 aa).

E271 is a binding site for Mg(2+).

It belongs to the class-II aminoacyl-tRNA synthetase family. Phe-tRNA synthetase alpha subunit type 1 subfamily. As to quaternary structure, tetramer of two alpha and two beta subunits. It depends on Mg(2+) as a cofactor.

The protein resides in the cytoplasm. It catalyses the reaction tRNA(Phe) + L-phenylalanine + ATP = L-phenylalanyl-tRNA(Phe) + AMP + diphosphate + H(+). The chain is Phenylalanine--tRNA ligase alpha subunit from Delftia acidovorans (strain DSM 14801 / SPH-1).